A 1164-amino-acid polypeptide reads, in one-letter code: Hamartin (1164 aa).

Residue Lys30 forms a Glycyl lysine isopeptide (Lys-Gly) (interchain with G-Cter in ubiquitin) linkage. The mediates interaction with WDR45B stretch occupies residues 403-787 (SDDYVHISLP…QIRQLQHDRE (385 aa)). Residues 439–571 (LNDRGSEEPP…ADESPAGDRE (133 aa)) form a disordered region. A compositionally biased stretch (basic and acidic residues) spans 474 to 487 (EKDKEEAAISRELS). Phosphoserine occurs at positions 487, 505, 511, 521, and 598. Polar residues predominate over residues 513–530 (PGSQRKTHSAASSSQGAS). The stretch at 721-997 (RKVIKAAALE…AAEERLDCCN (277 aa)) forms a coiled coil. The disordered stretch occupies residues 1006–1085 (GHNEEASGHN…TTVGSLPSSK (80 aa)). Residues 1007-1020 (HNEEASGHNGETKT) show a composition bias toward basic and acidic residues. The span at 1073–1085 (SIPTTVGSLPSSK) shows a compositional bias: polar residues. A Phosphoserine modification is found at Ser1100. Residues 1131–1164 (IPLNLDGPHPSPPTPDSVGQLHIMDYNETHHEHS) are disordered. A compositionally biased stretch (basic and acidic residues) spans 1155–1164 (DYNETHHEHS).

In terms of assembly, component of the TSC-TBC complex (also named Rhebulator complex), composed of 2 molecules of TSC1, 2 molecules of TSC2 and 1 molecule of TBC1D7. Probably forms a complex composed of chaperones HSP90 and HSP70, co-chaperones STIP1/HOP, CDC37, PPP5C, PTGES3/p23, TSC1 and client protein TSC2. Forms a complex composed of chaperones HSP90 and HSP70, co-chaperones CDC37, PPP5C, TSC1 and client protein TSC2, CDK4, AKT, RAF1 and NR3C1; this complex does not contain co-chaperones STIP1/HOP and PTGES3/p23. Forms a complex containing HSP90AA1, TSC1 and TSC2; TSC1 is required to recruit TCS2 to the complex. Interacts (via C-terminus) with the closed form of HSP90AA1 (via the middle domain and TPR repeat-binding motif). Interacts with DOCK7. Interacts with FBXW5. Interacts with WDR45B. Interacts with RPAP3 and URI1. Phosphorylation at Ser-505 does not affect interaction with TSC2. Post-translationally, 'Lys-63'-linked ubiquitinated at Lys-30 by PELI1; the ubiquitination promotes TSC1/TSC2 complex stability. In terms of tissue distribution, highly expressed in skeletal muscle, followed by heart, brain, placenta, pancreas, lung, liver and kidney. Also expressed in embryonic kidney cells.

Its subcellular location is the lysosome membrane. It localises to the cytoplasm. The protein localises to the cytosol. Functionally, non-catalytic component of the TSC-TBC complex, a multiprotein complex that acts as a negative regulator of the canonical mTORC1 complex, an evolutionarily conserved central nutrient sensor that stimulates anabolic reactions and macromolecule biosynthesis to promote cellular biomass generation and growth. The TSC-TBC complex acts as a GTPase-activating protein (GAP) for the small GTPase RHEB, a direct activator of the protein kinase activity of mTORC1. In absence of nutrients, the TSC-TBC complex inhibits mTORC1, thereby preventing phosphorylation of ribosomal protein S6 kinase (RPS6KB1 and RPS6KB2) and EIF4EBP1 (4E-BP1) by the mTORC1 signaling. The TSC-TBC complex is inactivated in response to nutrients, relieving inhibition of mTORC1. Within the TSC-TBC complex, TSC1 stabilizes TSC2 and prevents TSC2 self-aggregation. Acts as a tumor suppressor. Involved in microtubule-mediated protein transport via its ability to regulate mTORC1 signaling. Also acts as a co-chaperone for HSP90AA1 facilitating HSP90AA1 chaperoning of protein clients such as kinases, TSC2 and glucocorticoid receptor NR3C1. Increases ATP binding to HSP90AA1 and inhibits HSP90AA1 ATPase activity. Competes with the activating co-chaperone AHSA1 for binding to HSP90AA1, thereby providing a reciprocal regulatory mechanism for chaperoning of client proteins. Recruits TSC2 to HSP90AA1 and stabilizes TSC2 by preventing the interaction between TSC2 and ubiquitin ligase HERC1. The chain is Hamartin from Homo sapiens (Human).